We begin with the raw amino-acid sequence, 29 residues long: Glucagon (29 aa).

Belongs to the glucagon family.

It is found in the secreted. Promotes hydrolysis of glycogen and lipids, and raises the blood sugar level. The sequence is that of Glucagon (gcg) from Thunnus obesus (Bigeye tuna).